The chain runs to 103 residues: UPF0235 protein RHECIAT_CH0004196 (103 aa).

The protein belongs to the UPF0235 family.

This is UPF0235 protein RHECIAT_CH0004196 from Rhizobium etli (strain CIAT 652).